We begin with the raw amino-acid sequence, 90 residues long: Small ribosomal subunit protein bS18 (90 aa).

The protein belongs to the bacterial ribosomal protein bS18 family. Part of the 30S ribosomal subunit. Forms a tight heterodimer with protein bS6.

Binds as a heterodimer with protein bS6 to the central domain of the 16S rRNA, where it helps stabilize the platform of the 30S subunit. The protein is Small ribosomal subunit protein bS18 of Polynucleobacter asymbioticus (strain DSM 18221 / CIP 109841 / QLW-P1DMWA-1) (Polynucleobacter necessarius subsp. asymbioticus).